Consider the following 468-residue polypeptide: Uronate isomerase (468 aa).

It belongs to the metallo-dependent hydrolases superfamily. Uronate isomerase family.

The enzyme catalyses D-glucuronate = D-fructuronate. It catalyses the reaction aldehydo-D-galacturonate = keto-D-tagaturonate. It functions in the pathway carbohydrate metabolism; pentose and glucuronate interconversion. This Brachyspira hyodysenteriae (strain ATCC 49526 / WA1) protein is Uronate isomerase.